We begin with the raw amino-acid sequence, 281 residues long: Bifunctional protein FolD (281 aa).

Residues 167 to 169 (GRS) and Ser192 each bind NADP(+).

Belongs to the tetrahydrofolate dehydrogenase/cyclohydrolase family. In terms of assembly, homodimer.

The enzyme catalyses (6R)-5,10-methylene-5,6,7,8-tetrahydrofolate + NADP(+) = (6R)-5,10-methenyltetrahydrofolate + NADPH. It catalyses the reaction (6R)-5,10-methenyltetrahydrofolate + H2O = (6R)-10-formyltetrahydrofolate + H(+). It participates in one-carbon metabolism; tetrahydrofolate interconversion. Functionally, catalyzes the oxidation of 5,10-methylenetetrahydrofolate to 5,10-methenyltetrahydrofolate and then the hydrolysis of 5,10-methenyltetrahydrofolate to 10-formyltetrahydrofolate. The polypeptide is Bifunctional protein FolD (Alcanivorax borkumensis (strain ATCC 700651 / DSM 11573 / NCIMB 13689 / SK2)).